The chain runs to 791 residues: Lon protease (791 aa).

The Lon N-terminal domain occupies 3–209 (KPILISRAIV…TILHLLFDQL (207 aa)). 365–372 (GPPGVGKT) is an ATP binding site. The Lon proteolytic domain occupies 605–790 (TTIPGIVNGM…DEVYNIVFGE (186 aa)). Catalysis depends on residues serine 696 and lysine 739.

The protein belongs to the peptidase S16 family. In terms of assembly, homohexamer. Organized in a ring with a central cavity.

The protein resides in the cytoplasm. It catalyses the reaction Hydrolysis of proteins in presence of ATP.. In terms of biological role, ATP-dependent serine protease that mediates the selective degradation of mutant and abnormal proteins as well as certain short-lived regulatory proteins. Required for cellular homeostasis and for survival from DNA damage and developmental changes induced by stress. Degrades polypeptides processively to yield small peptide fragments that are 5 to 10 amino acids long. Binds to DNA in a double-stranded, site-specific manner. The chain is Lon protease from Ureaplasma parvum serovar 3 (strain ATCC 27815 / 27 / NCTC 11736).